A 311-amino-acid chain; its full sequence is Heparan sulfate glucosamine 3-O-sulfotransferase 1 (311 aa).

The N-terminal stretch at 1–20 (MTLLLLGAVLLVAQPQLVPS) is a signal peptide. An N-linked (GlcNAc...) asparagine glycan is attached at asparagine 52. Residues 68-72 (KGGTR), arginine 151, and serine 159 each bind 3'-phosphoadenylyl sulfate. N-linked (GlcNAc...) asparagine glycosylation is found at asparagine 196, asparagine 246, and asparagine 253. 3'-phosphoadenylyl sulfate is bound at residue tyrosine 259. Cysteine 260 and cysteine 269 are oxidised to a cystine. 274-278 (KGRAH) provides a ligand contact to 3'-phosphoadenylyl sulfate.

It belongs to the sulfotransferase 1 family.

It is found in the golgi apparatus lumen. It carries out the reaction alpha-D-glucosaminyl-[heparan sulfate](n) + 3'-phosphoadenylyl sulfate = 3-sulfo-alpha-D-glucosaminyl-[heparan sulfate](n) + adenosine 3',5'-bisphosphate + H(+). Functionally, sulfotransferase that utilizes 3'-phospho-5'-adenylyl sulfate (PAPS) to catalyze the transfer of a sulfo group to position 3 of glucosamine residues in heparan. Catalyzes the rate limiting step in the biosynthesis of heparan sulfate (HSact). This modification is a crucial step in the biosynthesis of anticoagulant heparan sulfate as it completes the structure of the antithrombin pentasaccharide binding site. In Rattus norvegicus (Rat), this protein is Heparan sulfate glucosamine 3-O-sulfotransferase 1 (Hs3st1).